The primary structure comprises 486 residues: Ammonium transporter 2 member 1 (486 aa).

11 helical membrane-spanning segments follow: residues 29–49 (ASTL…GSIV), 57–77 (SAFM…LVGF), 127–147 (LVLF…GSVL), 161–181 (LWLL…GFLY), 190–210 (GGYV…YWVG), 225–245 (ILLM…FNGG), 252–272 (IAAS…LLMW), 285–305 (VIGA…GAGL), 309–329 (WAAV…MMIL), 343–363 (LAVF…TGLL), and 399–419 (FVIA…GLFI). Residues 454–470 (RHDLSRGGGGGDRDGPA) are compositionally biased toward basic and acidic residues. The interval 454–473 (RHDLSRGGGGGDRDGPAGER) is disordered.

The protein belongs to the ammonia transporter channel (TC 1.A.11.2) family. Expressed in roots and leaf blades and sheaths.

Its subcellular location is the cell membrane. Involved in ammonium transport. This is Ammonium transporter 2 member 1 (AMT2-1) from Oryza sativa subsp. japonica (Rice).